We begin with the raw amino-acid sequence, 683 residues long: Long-chain fatty acid transport protein 3 (683 aa).

The helical transmembrane segment at Ala3 to Trp23 threads the bilayer. Residues Gly119–Gly128 show a composition bias toward gly residues. The segment at Gly119–Gly145 is disordered. Residues Ala133–Gly145 show a composition bias toward low complexity. ATP-binding positions include Thr288–Thr292, His331, Thr428, Asp528, Arg543, and Lys635.

It belongs to the ATP-dependent AMP-binding enzyme family. In terms of tissue distribution, expressed in bronchial and bronchiolar epithelial cells (at protein level).

Its subcellular location is the mitochondrion membrane. It catalyses the reaction a fatty acid(in) = a fatty acid(out). The enzyme catalyses a long-chain fatty acid + ATP + CoA = a long-chain fatty acyl-CoA + AMP + diphosphate. It carries out the reaction hexadecanoate + ATP + CoA = hexadecanoyl-CoA + AMP + diphosphate. The catalysed reaction is (9Z)-octadecenoate + ATP + CoA = (9Z)-octadecenoyl-CoA + AMP + diphosphate. It catalyses the reaction (9Z,12Z)-octadecadienoate + ATP + CoA = (9Z,12Z)-octadecadienoyl-CoA + AMP + diphosphate. The enzyme catalyses (5Z,8Z,11Z,14Z)-eicosatetraenoate + ATP + CoA = (5Z,8Z,11Z,14Z)-eicosatetraenoyl-CoA + AMP + diphosphate. It carries out the reaction a very long-chain fatty acid + ATP + CoA = a very long-chain fatty acyl-CoA + AMP + diphosphate. The catalysed reaction is tetracosanoate + ATP + CoA = tetracosanoyl-CoA + AMP + diphosphate. Functionally, mainly functions as an acyl-CoA ligase catalyzing the ATP-dependent formation of fatty acyl-CoA using LCFA and very-long-chain fatty acids (VLCFA) as substrates. Can mediate the levels of long-chain fatty acids (LCFA) in the cell by facilitating their transport across membranes. This chain is Long-chain fatty acid transport protein 3, found in Homo sapiens (Human).